The chain runs to 213 residues: uncharacterized protein (213 aa).

Positions 2–91 (SRHPEVKWAQ…AEAKWWKKLV (90 aa)) constitute a CS domain. Residues 168-213 (GMGGMGGMDEFEDESDDEEEVSKPQDAEKAAEAGKSQESDAKAETS) form a disordered region. Positions 176-187 (DEFEDESDDEEE) are enriched in acidic residues. Over residues 188–213 (VSKPQDAEKAAEAGKSQESDAKAETS) the composition is skewed to basic and acidic residues.

It belongs to the p23/wos2 family.

This is an uncharacterized protein from Oryza sativa subsp. japonica (Rice).